Consider the following 341-residue polypeptide: HTH-type transcriptional repressor PurR (341 aa).

In terms of domain architecture, HTH lacI-type spans 2–56 (ATIKDVAKRANVSTTTVSHVINKTRFVSEETRNAVWAAIKELHYSPSAVARSLKV). A DNA-binding region (H-T-H motif) is located at residues 4 to 23 (IKDVAKRANVSTTTVSHVIN). Residues 48-56 (SAVARSLKV) mediate DNA binding. Residues tyrosine 73, arginine 190, threonine 192, phenylalanine 221, and aspartate 275 each coordinate hypoxanthine.

In terms of assembly, homodimer.

It participates in purine metabolism; purine nucleotide biosynthesis [regulation]. Is the main repressor of the genes involved in the de novo synthesis of purine nucleotides, regulating purB, purC, purEK, purF, purHD, purL, purMN and guaBA expression. PurR is allosterically activated to bind its cognate DNA by binding the purine corepressors, hypoxanthine or guanine, thereby effecting transcription repression. This is HTH-type transcriptional repressor PurR from Escherichia coli O139:H28 (strain E24377A / ETEC).